The primary structure comprises 239 residues: Ribosomal RNA small subunit methyltransferase G (239 aa).

Residues G78, F83, 129 to 130 (AE), and R148 each bind S-adenosyl-L-methionine.

The protein belongs to the methyltransferase superfamily. RNA methyltransferase RsmG family.

It localises to the cytoplasm. Its function is as follows. Specifically methylates the N7 position of a guanine in 16S rRNA. In Clostridium perfringens (strain SM101 / Type A), this protein is Ribosomal RNA small subunit methyltransferase G.